The chain runs to 356 residues: Leucine carboxyl methyltransferase 1 (356 aa).

Residues R78, G101, D127, 183–184, and E218 contribute to the S-adenosyl-L-methionine site; that span reads DL.

It belongs to the methyltransferase superfamily. LCMT family.

The enzyme catalyses [phosphatase 2A protein]-C-terminal L-leucine + S-adenosyl-L-methionine = [phosphatase 2A protein]-C-terminal L-leucine methyl ester + S-adenosyl-L-homocysteine. Methylates the carboxyl group of the C-terminal leucine residue of protein phosphatase 2A catalytic subunits to form alpha-leucine ester residues. This Cryptococcus neoformans var. neoformans serotype D (strain JEC21 / ATCC MYA-565) (Filobasidiella neoformans) protein is Leucine carboxyl methyltransferase 1 (PPM1).